Reading from the N-terminus, the 84-residue chain is ATP synthase subunit c (84 aa).

A run of 2 helical transmembrane segments spans residues 9-29 and 54-74; these read IFGS…GFSL and IVAG…LLFI.

It belongs to the ATPase C chain family. F-type ATPases have 2 components, F(1) - the catalytic core - and F(0) - the membrane proton channel. F(1) has five subunits: alpha(3), beta(3), gamma(1), delta(1), epsilon(1). F(0) has three main subunits: a(1), b(2) and c(10-14). The alpha and beta chains form an alternating ring which encloses part of the gamma chain. F(1) is attached to F(0) by a central stalk formed by the gamma and epsilon chains, while a peripheral stalk is formed by the delta and b chains.

Its subcellular location is the cell inner membrane. F(1)F(0) ATP synthase produces ATP from ADP in the presence of a proton or sodium gradient. F-type ATPases consist of two structural domains, F(1) containing the extramembraneous catalytic core and F(0) containing the membrane proton channel, linked together by a central stalk and a peripheral stalk. During catalysis, ATP synthesis in the catalytic domain of F(1) is coupled via a rotary mechanism of the central stalk subunits to proton translocation. In terms of biological role, key component of the F(0) channel; it plays a direct role in translocation across the membrane. A homomeric c-ring of between 10-14 subunits forms the central stalk rotor element with the F(1) delta and epsilon subunits. This chain is ATP synthase subunit c, found in Histophilus somni (strain 129Pt) (Haemophilus somnus).